A 280-amino-acid chain; its full sequence is S-methyl-5'-thioadenosine phosphorylase (280 aa).

Residues S18, 60-61, and 93-94 contribute to the phosphate site; these read RH and TA. M196 is a substrate binding site. T197 provides a ligand contact to phosphate. Substrate is bound at residue 220 to 222; the sequence is DYD.

The protein belongs to the PNP/MTAP phosphorylase family. MTAP subfamily. As to quaternary structure, homotrimer.

It is found in the cytoplasm. The protein resides in the nucleus. The enzyme catalyses S-methyl-5'-thioadenosine + phosphate = 5-(methylsulfanyl)-alpha-D-ribose 1-phosphate + adenine. It participates in amino-acid biosynthesis; L-methionine biosynthesis via salvage pathway; S-methyl-5-thio-alpha-D-ribose 1-phosphate from S-methyl-5'-thioadenosine (phosphorylase route): step 1/1. In terms of biological role, catalyzes the reversible phosphorylation of S-methyl-5'-thioadenosine (MTA) to adenine and 5-methylthioribose-1-phosphate. Involved in the breakdown of MTA, a major by-product of polyamine biosynthesis. Responsible for the first step in the methionine salvage pathway after MTA has been generated from S-adenosylmethionine. Has broad substrate specificity with 6-aminopurine nucleosides as preferred substrates. The polypeptide is S-methyl-5'-thioadenosine phosphorylase (Ciona intestinalis (Transparent sea squirt)).